The sequence spans 1526 residues: Cell wall protein IFF4 (1526 aa).

The first 20 residues, 1–20 (MKFLQKFIITVALLTNIVFA), serve as a signal peptide directing secretion. N93 and N498 each carry an N-linked (GlcNAc...) asparagine glycan. A disordered region spans residues 512-541 (SSAGGSSFPEETHMLQTSDSDLSSTAGSES). Over residues 525–541 (MLQTSDSDLSSTAGSES) the composition is skewed to polar residues. N-linked (GlcNAc...) asparagine glycosylation is present at N637. The segment at 1180–1207 (WNGAKSDSPHTSESDITSQYNSHSTSVA) is disordered. A compositionally biased stretch (polar residues) spans 1193-1207 (SDITSQYNSHSTSVA). 5 N-linked (GlcNAc...) asparagine glycosylation sites follow: N1451, N1463, N1479, N1502, and N1506. The disordered stretch occupies residues 1455–1483 (SSVSGYPTNRSDSNGYANTPTTGSNTSGD). Residue N1502 is the site of GPI-anchor amidated asparagine attachment. The propeptide at 1503-1526 (GSTNISNKYLKFLGTVVSILILLI) is removed in mature form.

Belongs to the HYR1/IFF family. In terms of processing, the GPI-anchor is attached to the protein in the endoplasmic reticulum and serves to target the protein to the cell surface. There, the glucosamine-inositol phospholipid moiety is cleaved off and the GPI-$modified mannoprotein is covalently attached via its lipidless GPI glycan remnant to the 1,6-beta-glucan of the outer cell wall layer.

The protein resides in the secreted. It localises to the cell wall. The protein localises to the membrane. GPI-anchored cell wall protein involved in cell wall organization, hyphal growth, as well as in host-fungal interaction and virulence. Plays a role in adherence to plastic and to host epithelial cells. Promotes the tissue fungal burden during murine vaginal candidiasis. Also increases susceptibility to neutrophil-mediated killing. Furthermore, contributes to the severity of hematogenously disseminated candidiasis in normal mice, but not in neutropenic mice. The polypeptide is Cell wall protein IFF4 (IFF4) (Candida albicans (strain SC5314 / ATCC MYA-2876) (Yeast)).